A 93-amino-acid polypeptide reads, in one-letter code: Co-chaperonin GroES (93 aa).

Belongs to the GroES chaperonin family. As to quaternary structure, heptamer of 7 subunits arranged in a ring. Interacts with the chaperonin GroEL.

The protein localises to the cytoplasm. Together with the chaperonin GroEL, plays an essential role in assisting protein folding. The GroEL-GroES system forms a nano-cage that allows encapsulation of the non-native substrate proteins and provides a physical environment optimized to promote and accelerate protein folding. GroES binds to the apical surface of the GroEL ring, thereby capping the opening of the GroEL channel. This is Co-chaperonin GroES from Geobacillus kaustophilus (strain HTA426).